The following is a 365-amino-acid chain: Alanine racemase (365 aa).

Lys-32 serves as the catalytic Proton acceptor; specific for D-alanine. Position 32 is an N6-(pyridoxal phosphate)lysine (Lys-32). Arg-128 serves as a coordination point for substrate. The active-site Proton acceptor; specific for L-alanine is Tyr-257. Met-305 serves as a coordination point for substrate.

Belongs to the alanine racemase family. The cofactor is pyridoxal 5'-phosphate.

The enzyme catalyses L-alanine = D-alanine. It functions in the pathway amino-acid biosynthesis; D-alanine biosynthesis; D-alanine from L-alanine: step 1/1. Functionally, catalyzes the interconversion of L-alanine and D-alanine. May also act on other amino acids. This Francisella tularensis subsp. novicida (strain U112) protein is Alanine racemase (alr).